Consider the following 177-residue polypeptide: Nucleoside triphosphate/diphosphate phosphatase (177 aa).

Arginine 23 (proton donor) is an active-site residue. Mg(2+) is bound by residues asparagine 87, aspartate 103, aspartate 105, aspartate 107, aspartate 120, and glutamate 123.

This sequence belongs to the Ntdp family. Requires Mg(2+) as cofactor.

It catalyses the reaction a ribonucleoside 5'-triphosphate + H2O = a ribonucleoside 5'-diphosphate + phosphate + H(+). The catalysed reaction is a ribonucleoside 5'-diphosphate + H2O = a ribonucleoside 5'-phosphate + phosphate + H(+). Has nucleoside phosphatase activity towards nucleoside triphosphates and nucleoside diphosphates. This is Nucleoside triphosphate/diphosphate phosphatase from Enterococcus faecalis (strain ATCC 700802 / V583).